Reading from the N-terminus, the 2226-residue chain is Rotatin (2226 aa).

The interval 295 to 346 (EARGPYHSPNPSPGSSSSRPSVVGRTGQRPRGDGQDWDAVSSSGSSSHTHVN) is disordered. Over residues 307 to 319 (PGSSSSRPSVVGR) the composition is skewed to low complexity. A Phosphoserine modification is found at S311. N6-acetyllysine is present on K813.

It belongs to the rotatin family. As to quaternary structure, interacts with PPP1R35; this interaction allows the mutual recruitment to the centriole.

It is found in the cytoplasm. The protein localises to the cytoskeleton. It localises to the cilium basal body. In terms of biological role, involved in the genetic cascade that governs left-right specification. Required for correct asymmetric expression of NODAL, LEFTY and PITX2. The polypeptide is Rotatin (Mus musculus (Mouse)).